Reading from the N-terminus, the 624-residue chain is Phosphoenolpyruvate carboxykinase [GTP] (624 aa).

Residues R88 and 222 to 224 each bind substrate; that span reads YGG. Mn(2+)-binding residues include K231 and H250. S272 contributes to the substrate binding site. 273 to 278 contacts GTP; the sequence is MCGKTS. The active site involves C274. Residue D291 participates in Mn(2+) binding. Position 386-388 (386-388) interacts with substrate; the sequence is NAR. Residues R388 and R420 each contribute to the GTP site.

Belongs to the phosphoenolpyruvate carboxykinase [GTP] family. Mn(2+) is required as a cofactor.

The protein resides in the cytoplasm. It carries out the reaction oxaloacetate + GTP = phosphoenolpyruvate + GDP + CO2. The protein operates within carbohydrate biosynthesis; gluconeogenesis. Catalyzes the conversion of oxaloacetate (OAA) to phosphoenolpyruvate (PEP), the rate-limiting step in the metabolic pathway that produces glucose from lactate and other precursors derived from the citric acid cycle. The sequence is that of Phosphoenolpyruvate carboxykinase [GTP] from Pyrococcus furiosus (strain ATCC 43587 / DSM 3638 / JCM 8422 / Vc1).